A 469-amino-acid polypeptide reads, in one-letter code: UDP-N-acetylmuramoylalanine--D-glutamate ligase (469 aa).

123–129 provides a ligand contact to ATP; it reads GTNGKST.

The protein belongs to the MurCDEF family.

It is found in the cytoplasm. It carries out the reaction UDP-N-acetyl-alpha-D-muramoyl-L-alanine + D-glutamate + ATP = UDP-N-acetyl-alpha-D-muramoyl-L-alanyl-D-glutamate + ADP + phosphate + H(+). Its pathway is cell wall biogenesis; peptidoglycan biosynthesis. Functionally, cell wall formation. Catalyzes the addition of glutamate to the nucleotide precursor UDP-N-acetylmuramoyl-L-alanine (UMA). The chain is UDP-N-acetylmuramoylalanine--D-glutamate ligase from Caulobacter sp. (strain K31).